The following is a 245-amino-acid chain: tRNA pseudouridine synthase A (245 aa).

The Nucleophile role is filled by Asp-52. Position 111 (Tyr-111) interacts with substrate.

Belongs to the tRNA pseudouridine synthase TruA family. Homodimer.

It catalyses the reaction uridine(38/39/40) in tRNA = pseudouridine(38/39/40) in tRNA. Its function is as follows. Formation of pseudouridine at positions 38, 39 and 40 in the anticodon stem and loop of transfer RNAs. The protein is tRNA pseudouridine synthase A of Rickettsia felis (strain ATCC VR-1525 / URRWXCal2) (Rickettsia azadi).